The chain runs to 320 residues: Myeloid-associated differentiation marker (320 aa).

MARVEL domains follow at residues 25 to 157 (ALTQ…ARPG) and 162 to 317 (YMAT…RLVF). Transmembrane regions (helical) follow at residues 35-55 (LLQLISTCVAFSLVASVGAWT), 61-81 (WAMFTWCFCFAVTLIILIVEL), 95-115 (FPITFACYAALFCLSSSIIYP), 131-151 (AIAATTFSCVACLAYATEVAW), 165-185 (TVPGLLKVFETFVACIIFAFI), 197-217 (LEWCVAVYAICFILAGVTILL), 233-253 (FLSGLALLSVLFYATAIVLWP), and 292-312 (LAVSILTGINLLAYVSDLVYS).

The protein belongs to the MAL family.

It localises to the membrane. In Mus musculus (Mouse), this protein is Myeloid-associated differentiation marker (Myadm).